The following is a 159-amino-acid chain: Large ribosomal subunit protein uL15 (159 aa).

Positions 1 to 46 are disordered; sequence MKLNELSPSVPKKNRKRIGRGNSSGWGKTAGKGSNGQNSRAGGGVK. The span at 22-34 shows a compositional bias: gly residues; that stretch reads NSSGWGKTAGKGS.

The protein belongs to the universal ribosomal protein uL15 family. Part of the 50S ribosomal subunit.

Functionally, binds to the 23S rRNA. This chain is Large ribosomal subunit protein uL15, found in Fusobacterium nucleatum subsp. nucleatum (strain ATCC 25586 / DSM 15643 / BCRC 10681 / CIP 101130 / JCM 8532 / KCTC 2640 / LMG 13131 / VPI 4355).